A 151-amino-acid chain; its full sequence is 3-dehydroquinate dehydratase (151 aa).

The active-site Proton acceptor is tyrosine 24. Residues asparagine 76, histidine 82, and aspartate 89 each coordinate substrate. Catalysis depends on histidine 102, which acts as the Proton donor. Residues 103-104 and arginine 113 each bind substrate; that span reads VS.

It belongs to the type-II 3-dehydroquinase family. Homododecamer.

It carries out the reaction 3-dehydroquinate = 3-dehydroshikimate + H2O. The protein operates within metabolic intermediate biosynthesis; chorismate biosynthesis; chorismate from D-erythrose 4-phosphate and phosphoenolpyruvate: step 3/7. Functionally, catalyzes a trans-dehydration via an enolate intermediate. This is 3-dehydroquinate dehydratase from Rhodopseudomonas palustris (strain HaA2).